The primary structure comprises 3375 residues: Basement membrane proteoglycan (3375 aa).

A signal peptide spans 1 to 22 (MKRSSTVLAALLALLLVATNDA). Positions 45-130 (VQITVFPSEK…NTVEARATLS (86 aa)) constitute an Ig-like C2-type 1 domain. Intrachain disulfides connect cysteine 66–cysteine 114, cysteine 149–cysteine 161, cysteine 156–cysteine 174, cysteine 168–cysteine 183, cysteine 190–cysteine 202, cysteine 197–cysteine 215, cysteine 209–cysteine 224, cysteine 233–cysteine 246, cysteine 240–cysteine 259, cysteine 253–cysteine 268, and cysteine 293–cysteine 344. LDL-receptor class A domains follow at residues 148-184 (QCMA…ANCP), 189-225 (TCEP…LNCN), and 232-269 (DCKP…VGCV). The 85-residue stretch at 271-355 (PTVVDPPQTN…AINVKGRVLA (85 aa)) folds into the Ig-like C2-type 2 domain. The interval 364–385 (VDDPRPQPPQPPTAPPQRASCD) is disordered. Over residues 369 to 378 (PQPPQPPTAP) the composition is skewed to pro residues. Disulfide bonds link cysteine 384–cysteine 400, cysteine 402–cysteine 411, and cysteine 414–cysteine 429. The Laminin EGF-like 1; truncated domain occupies 384–431 (CDTRGAVTPYPNNYGTCECKSQVTGPNCDQCKPGAFHLSEKSPEGCLK). The 10-residue stretch at 432-441 (CFCFGVSNDC) folds into the Laminin EGF-like 2; first part domain. In terms of domain architecture, Laminin IV type A 1 spans 450-633 (KDRLMFAGDA…PDGLALEVEQ (184 aa)). Cystine bridges form between cysteine 634/cysteine 648, cysteine 636/cysteine 689, cysteine 691/cysteine 700, and cysteine 703/cysteine 718. Positions 634–666 (CVCPPGYLGTSCEDCAPGYERSGYGPYLGTCVP) constitute a Laminin EGF-like 2; second part domain. The Laminin EGF-like 3; truncated domain occupies 674–720 (CGPGAVAPTAPAQGQCQCKASVIGPNCDRCAPNSFGLAPTNPQGCIP). In terms of domain architecture, Laminin EGF-like 4; first part spans 721 to 730 (CFCSGVTQQC). The Laminin IV type A 2 domain maps to 740 to 921 (VSIDYARGDR…QGLTAAEVEQ (182 aa)). Positions 922-954 (CICPPGYVGTSCEDCAPGYSRTGGGLYLGLCEK) constitute a Laminin EGF-like 4; second part domain. Intrachain disulfides connect cysteine 955–cysteine 964, cysteine 957–cysteine 971, cysteine 974–cysteine 983, cysteine 986–cysteine 1002, cysteine 1011–cysteine 1021, cysteine 1013–cysteine 1027, cysteine 1030–cysteine 1039, cysteine 1042–cysteine 1058, cysteine 1061–cysteine 1069, cysteine 1063–cysteine 1079, cysteine 1082–cysteine 1091, cysteine 1094–cysteine 1109, cysteine 1152–cysteine 1200, cysteine 1247–cysteine 1294, and cysteine 1338–cysteine 1384. 3 consecutive Laminin EGF-like domains span residues 955 to 1004 (CECN…DCQP), 1011 to 1060 (CHCN…DCTP), and 1061 to 1111 (CPCP…VCEP). Ig-like C2-type domains follow at residues 1126-1222 (PHEV…KRIS), 1226-1311 (PQPV…AVLE), 1319-1401 (PKVD…EPVQ), 1410-1499 (PQRG…ARLN), 1503-1585 (PQAI…RPVE), 1588-1680 (PARV…TPAT), 1690-1785 (PQVE…STLN), 1793-1878 (PRPV…VRLE), 1886-1970 (PTAV…GNVN), 1973-2069 (PSLT…IYIE), 2073-2163 (PSRI…AVHV), 2173-2260 (PKVE…TAVS), 2263-2343 (QQDK…GFVT), 2349-2435 (PDTI…RTVL), and 2446-2530 (TFTV…VDLQ). The span at 1388–1400 (DPSDNTPLQSEPV) shows a compositional bias: polar residues. Disordered stretches follow at residues 1388 to 1426 (DPSD…QTVN) and 1478 to 1497 (EYEC…PPAR). The N-linked (GlcNAc...) asparagine glycan is linked to asparagine 1422. 4 cysteine pairs are disulfide-bonded: cysteine 1435/cysteine 1481, cysteine 1527/cysteine 1573, cysteine 1618/cysteine 1663, and cysteine 1719/cysteine 1767. Over residues 1481-1497 (CTSTEPDGSTQLSPPAR) the composition is skewed to polar residues. The tract at residues 1773-1792 (NSPPVKTNPSTLNVTPEGTP) is disordered. The span at 1776–1788 (PVKTNPSTLNVTP) shows a compositional bias: polar residues. 15 disulfides stabilise this stretch: cysteine 1814–cysteine 1861, cysteine 1907–cysteine 1954, cysteine 1998–cysteine 2053, cysteine 2099–cysteine 2147, cysteine 2195–cysteine 2242, cysteine 2284–cysteine 2329, cysteine 2374–cysteine 2420, cysteine 2467–cysteine 2514, cysteine 2713–cysteine 2725, cysteine 2719–cysteine 2736, cysteine 2738–cysteine 2747, cysteine 2754–cysteine 2764, cysteine 2759–cysteine 2773, cysteine 2775–cysteine 2784, and cysteine 2935–cysteine 2960. The segment at 1880-1918 (TEDQEPPTAVVEPRTWNGKPGERHQFRCITTGSPTPKIT) is disordered. Over residues 1907-1918 (CITTGSPTPKIT) the composition is skewed to polar residues. N-linked (GlcNAc...) asparagine glycosylation occurs at asparagine 2476. One can recognise a Laminin G-like 1 domain in the interval 2532-2713 (DDFIPVIDGE…PSSVVKYDAC (182 aa)). Residues 2793-2960 (PLGFTSDTSF…LSSSGDISSC (168 aa)) enclose the Laminin G-like 2 domain. The N-linked (GlcNAc...) asparagine glycan is linked to asparagine 2950. The span at 2952–2963 (SSSGDISSCEES) shows a compositional bias: low complexity. The interval 2952-3124 (SSSGDISSCE…GTLPPDSSSE (173 aa)) is disordered. 2 stretches are compositionally biased toward acidic residues: residues 2979–2990 (EEPEAVIEEPTT) and 2999–3010 (PITEEPTEEPTT). The segment covering 3011–3033 (TEEPTTTEEPTTTTEEPTTTTTE) has biased composition (low complexity). The span at 3034–3044 (EPYHIYETSRD) shows a compositional bias: basic and acidic residues. The segment covering 3049 to 3079 (IIIPVETTTTSTTTTSTTEEPEAEPALVLPT) has biased composition (low complexity). The segment covering 3081-3094 (PVEENDVSDEEEEI) has biased composition (acidic residues). 4 cysteine pairs are disulfide-bonded: cysteine 3141-cysteine 3152, cysteine 3146-cysteine 3162, cysteine 3164-cysteine 3173, and cysteine 3333-cysteine 3359. N-linked (GlcNAc...) asparagine glycans are attached at residues asparagine 3143 and asparagine 3156. In terms of domain architecture, Laminin G-like 3 spans 3180 to 3359 (EHAARFDGDA…AIDGKNVKPC (180 aa)).

As to quaternary structure, component of an integrin containing attachment complex, composed of at least pat-2, pat-3, pat-4, pat-6, unc-52, unc-97 and unc-112. As to expression, detected on embryonic and adult body wall muscle cells (at protein level). Found in the basement membrane of all contractile tissues (at protein level). Expressed in gonadal sheath cells and spermatheca.

Its subcellular location is the secreted. It is found in the extracellular space. The protein localises to the extracellular matrix. The protein resides in the basement membrane. It localises to the cytoplasm. Its subcellular location is the myofibril. It is found in the sarcomere. The protein localises to the m line. Functionally, component of an integrin containing attachment complex, which is required for muscle development and maintenance. Probable structural role in myofilament assembly and/or attachment of the myofilament lattice to the cell membrane. May be an extracellular anchor for integrin receptors in body wall muscles and myoepithelial sheath cells. During the formation of neuromuscular junctions at the larval stage, negatively regulates membrane protrusion from body wall muscles, probably downstream of the integrin complex formed by pat-2 and pat-3. Involved in ovulation. Required for normal lifespan. This chain is Basement membrane proteoglycan, found in Caenorhabditis elegans.